Reading from the N-terminus, the 272-residue chain is HMP-PP phosphatase (272 aa).

The active-site Nucleophile is the Asp-8. Mg(2+)-binding residues include Asp-8, Asp-10, and Asp-212.

Belongs to the HAD-like hydrolase superfamily. Cof family. The cofactor is Mg(2+).

It catalyses the reaction 4-amino-2-methyl-5-(diphosphooxymethyl)pyrimidine + H2O = 4-amino-2-methyl-5-(phosphooxymethyl)pyrimidine + phosphate + H(+). Functionally, catalyzes the hydrolysis of 4-amino-2-methyl-5-hydroxymethylpyrimidine pyrophosphate (HMP-PP) to 4-amino-2-methyl-5-hydroxymethylpyrimidine phosphate (HMP-P). This is HMP-PP phosphatase from Escherichia coli (strain 55989 / EAEC).